Here is a 413-residue protein sequence, read N- to C-terminus: Divalent metal cation transporter MntH (413 aa).

11 consecutive transmembrane segments (helical) span residues 19 to 39 (FALM…GNFA), 49 to 69 (GYQL…IQLM), 94 to 114 (VWFY…AEFI), 122 to 142 (LVFG…TFLI), 155 to 175 (LVIG…LFFS), 196 to 216 (AVLL…IYLH), 240 to 260 (VAIA…TAAA), 287 to 307 (AAAL…TVVG), 323 to 343 (IPLL…ILAG), 349 to 369 (ILVM…IPLL), and 393 to 413 (LIVV…ALNL).

It belongs to the NRAMP family.

It localises to the cell inner membrane. Functionally, h(+)-stimulated, divalent metal cation uptake system. The chain is Divalent metal cation transporter MntH from Erwinia tasmaniensis (strain DSM 17950 / CFBP 7177 / CIP 109463 / NCPPB 4357 / Et1/99).